Here is a 150-residue protein sequence, read N- to C-terminus: UPF0178 protein ASA_3749 (150 aa).

This sequence belongs to the UPF0178 family.

In Aeromonas salmonicida (strain A449), this protein is UPF0178 protein ASA_3749.